We begin with the raw amino-acid sequence, 209 residues long: Thymidylate kinase (209 aa).

10–17 is a binding site for ATP; sequence GLDGAGKS.

Belongs to the thymidylate kinase family.

It catalyses the reaction dTMP + ATP = dTDP + ADP. Phosphorylation of dTMP to form dTDP in both de novo and salvage pathways of dTTP synthesis. The chain is Thymidylate kinase from Francisella tularensis subsp. tularensis (strain FSC 198).